Consider the following 533-residue polypeptide: Adenine deaminase (533 aa).

The protein belongs to the metallo-dependent hydrolases superfamily. Adenine deaminase family. The cofactor is Mn(2+).

It carries out the reaction adenine + H2O + H(+) = hypoxanthine + NH4(+). The protein is Adenine deaminase of Sulfurovum sp. (strain NBC37-1).